We begin with the raw amino-acid sequence, 66 residues long: Large ribosomal subunit protein bL35 (66 aa).

Belongs to the bacterial ribosomal protein bL35 family.

This chain is Large ribosomal subunit protein bL35, found in Treponema pallidum (strain Nichols).